The sequence spans 99 residues: Acylphosphatase-1 (99 aa).

Alanine 2 carries the post-translational modification N-acetylalanine. The 91-residue stretch at 9 to 99 folds into the Acylphosphatase-like domain; the sequence is SVDYEIFGKV…LDYSDFQIVK (91 aa). Residues arginine 24 and asparagine 42 contribute to the active site.

Belongs to the acylphosphatase family. Organ-common type isozyme is found in many different tissues.

The catalysed reaction is an acyl phosphate + H2O = a carboxylate + phosphate + H(+). The polypeptide is Acylphosphatase-1 (ACYP1) (Homo sapiens (Human)).